A 516-amino-acid polypeptide reads, in one-letter code: MEISYGRALWRNFLGQSPDWYKLALIIFLIVNPLVFAVAPFVAGWLLVVEFIFTLAMALKCYPLLPGGLLAIEALLIGMTSPAHVREEIAGNLEVLLLLIFMVAGIYFMKQLLLFVFTRLLLGIRSKMLLSLAFCLAAAFLSAFLDALTVVAVVISVAVGFYGIYHRVASARPDDNDLLDDSHIEQHYREVLEQFRGFLRSLMMHAGVGTALGGVMTMVGEPQNLIIAKAAGWHFGEFFIRMAPVTVPVMVCGLLTCLLVEKYRLFGYGEPLPPTVRKVLQDFDDRSRAQRSRQEQLRLLAQAVIGVWLIVALAFHLAEVGLIGLSVIILATTFSGVTDEHAIGKAFTEALPFTALLTVFFAIVAVIIDQQLFTPVIEFVLQASPHAQLSLFYLFNGLLSSISDNVFVGTVYINEAKTALEHGVISLPQFEMLAVAINTGTNLPSVATPNGQAAFLFLLTSALAPLIRLSYGRMVWMALPYTLVLTLVGLLCVEFTLMPVTNWLLAHGWVTTPTLP.

12 helical membrane passes run 23–43, 61–80, 97–117, 120–140, 144–164, 202–222, 238–258, 303–323, 348–368, 391–411, 447–467, and 475–495; these read LALIIFLIVNPLVFAVAPFVA, CYPLLPGGLLAIEALLIGMT, LLLIFMVAGIYFMKQLLLFVF, LLLGIRSKMLLSLAFCLAAAF, FLDALTVVAVVISVAVGFYGI, LMMHAGVGTALGGVMTMVGEP, FFIRMAPVTVPVMVCGLLTCL, AVIGVWLIVALAFHLAEVGLI, TEALPFTALLTVFFAIVAVII, LFYLFNGLLSSISDNVFVGTV, ATPNGQAAFLFLLTSALAPLI, and VWMALPYTLVLTLVGLLCVEF.

This sequence belongs to the NhaB Na(+)/H(+) (TC 2.A.34) antiporter family.

The protein resides in the cell inner membrane. It carries out the reaction 2 Na(+)(in) + 3 H(+)(out) = 2 Na(+)(out) + 3 H(+)(in). Functionally, na(+)/H(+) antiporter that extrudes sodium in exchange for external protons. The polypeptide is Na(+)/H(+) antiporter NhaB (Klebsiella pneumoniae (strain 342)).